Here is a 360-residue protein sequence, read N- to C-terminus: S-adenosylmethionine:tRNA ribosyltransferase-isomerase (360 aa).

Belongs to the QueA family. As to quaternary structure, monomer.

Its subcellular location is the cytoplasm. It carries out the reaction 7-aminomethyl-7-carbaguanosine(34) in tRNA + S-adenosyl-L-methionine = epoxyqueuosine(34) in tRNA + adenine + L-methionine + 2 H(+). It participates in tRNA modification; tRNA-queuosine biosynthesis. Transfers and isomerizes the ribose moiety from AdoMet to the 7-aminomethyl group of 7-deazaguanine (preQ1-tRNA) to give epoxyqueuosine (oQ-tRNA). In Nitrobacter winogradskyi (strain ATCC 25391 / DSM 10237 / CIP 104748 / NCIMB 11846 / Nb-255), this protein is S-adenosylmethionine:tRNA ribosyltransferase-isomerase.